Consider the following 418-residue polypeptide: Peptide chain release factor subunit 1 (418 aa).

This sequence belongs to the eukaryotic release factor 1 family. Heterodimer of two subunits, one of which binds GTP.

The protein resides in the cytoplasm. Directs the termination of nascent peptide synthesis (translation) in response to the termination codons UAA, UAG and UGA. The sequence is that of Peptide chain release factor subunit 1 from Haloarcula marismortui (strain ATCC 43049 / DSM 3752 / JCM 8966 / VKM B-1809) (Halobacterium marismortui).